The sequence spans 357 residues: Anthranilate phosphoribosyltransferase (357 aa).

5-phospho-alpha-D-ribose 1-diphosphate is bound by residues Gly-94, 97-98 (GD), Thr-102, 104-107 (NLST), 122-130 (KHGNRAASS), and Gly-134. Gly-94 lines the anthranilate pocket. Position 106 (Ser-106) interacts with Mg(2+). Asn-125 is a binding site for anthranilate. Residue Arg-180 coordinates anthranilate. Residues Asp-238 and Glu-239 each coordinate Mg(2+).

The protein belongs to the anthranilate phosphoribosyltransferase family. Homodimer. Mg(2+) is required as a cofactor.

The catalysed reaction is N-(5-phospho-beta-D-ribosyl)anthranilate + diphosphate = 5-phospho-alpha-D-ribose 1-diphosphate + anthranilate. The protein operates within amino-acid biosynthesis; L-tryptophan biosynthesis; L-tryptophan from chorismate: step 2/5. In terms of biological role, catalyzes the transfer of the phosphoribosyl group of 5-phosphorylribose-1-pyrophosphate (PRPP) to anthranilate to yield N-(5'-phosphoribosyl)-anthranilate (PRA). The polypeptide is Anthranilate phosphoribosyltransferase (Mycobacterium sp. (strain JLS)).